A 191-amino-acid polypeptide reads, in one-letter code: Protein GrpE (191 aa).

The segment covering 1–19 (MKDEHNQKHDHLSQKEPES) has biased composition (basic and acidic residues). Residues 1–44 (MKDEHNQKHDHLSQKEPESYQKACACKEQQDEEMQEAGEKEGEI) form a disordered region.

It belongs to the GrpE family. As to quaternary structure, homodimer.

Its subcellular location is the cytoplasm. Participates actively in the response to hyperosmotic and heat shock by preventing the aggregation of stress-denatured proteins, in association with DnaK and GrpE. It is the nucleotide exchange factor for DnaK and may function as a thermosensor. Unfolded proteins bind initially to DnaJ; upon interaction with the DnaJ-bound protein, DnaK hydrolyzes its bound ATP, resulting in the formation of a stable complex. GrpE releases ADP from DnaK; ATP binding to DnaK triggers the release of the substrate protein, thus completing the reaction cycle. Several rounds of ATP-dependent interactions between DnaJ, DnaK and GrpE are required for fully efficient folding. The protein is Protein GrpE of Helicobacter pylori (strain G27).